The sequence spans 419 residues: Odorant receptor 56a (419 aa).

The Cytoplasmic portion of the chain corresponds to 1-41; that stretch reads MFKVKDLLLSPTTFEDPIFGTHLRYFQWYGYVASKDQNRPL. A helical membrane pass occupies residues 42 to 62; the sequence is LSLIRCTILTASIWLSCALML. Residues 63 to 76 lie on the Extracellular side of the membrane; sequence ARVFRGYENLNDGA. A helical transmembrane segment spans residues 77 to 97; it reads TSYATAVQYFAVSIAMFNAYV. At 98-137 the chain is on the cytoplasmic side; that stretch reads QRDKVISLLRVAHSDIQNLMHEADNREMELLVATQAYTRT. Residues 138–158 traverse the membrane as a helical segment; it reads ITLLIWIPSVIAGLMAYSDCI. The Extracellular portion of the chain corresponds to 159–196; that stretch reads YRSLFLPKSVFNVPAVRRGEEHPILLFQLFPFGELCDN. The chain crosses the membrane as a helical span at residues 197–217; it reads FVVGYLGPWYALGLGITAIPL. Residues 218–292 are Cytoplasmic-facing; sequence WHTFITCLMK…FVQELQYLIC (75 aa). The helical transmembrane segment at 293–313 threads the bilayer; sequence VPVMADFIIFSVLICFLFFAL. At 314–323 the chain is on the extracellular side; the sequence is TVGVPSKMDY. Residues 324 to 344 traverse the membrane as a helical segment; it reads FFMFIYLFVMAGILWIYHWHA. Residues 345 to 389 lie on the Cytoplasmic side of the membrane; it reads TLIVECHDELSLAYFSCGWYNFEMPLQKMLVFMMMHAQRPMKMRA. Residues 390 to 410 form a helical membrane-spanning segment; that stretch reads LLVDLNLRTFIDIGRGAYSYF. Over 411–419 the chain is Extracellular; the sequence is NLLRSSHLY.

The protein belongs to the insect chemoreceptor superfamily. Heteromeric odorant receptor channel (TC 1.A.69) family. Or30a subfamily. Interacts with Orco. Complexes exist early in the endomembrane system in olfactory sensory neurons (OSNs), coupling these complexes to the conserved ciliary trafficking pathway. Expressed in olfactory sensory neurons in the antenna.

The protein resides in the cell membrane. In terms of biological role, odorant receptor which mediates acceptance or avoidance behavior, depending on its substrates. The odorant receptor repertoire encodes a large collection of odor stimuli that vary widely in identity, intensity, and duration. May form a complex with Orco to form odorant-sensing units, providing sensitive and prolonged odorant signaling and calcium permeability. Specific receptor for geosmin, a microbial odorant that constitutes an ecologically relevant stimulus that alerts flies to the presence of harmful microbes and induces avoidance behavior. The chain is Odorant receptor 56a (Or56a) from Drosophila melanogaster (Fruit fly).